Here is a 159-residue protein sequence, read N- to C-terminus: Putative 4-hydroxy-4-methyl-2-oxoglutarate aldolase (159 aa).

Residues Gly-78–Ile-81 and Arg-100 contribute to the substrate site. Residue Asp-101 participates in a divalent metal cation binding.

Belongs to the class II aldolase/RraA-like family. In terms of assembly, homotrimer. It depends on a divalent metal cation as a cofactor.

It carries out the reaction 4-hydroxy-4-methyl-2-oxoglutarate = 2 pyruvate. The catalysed reaction is oxaloacetate + H(+) = pyruvate + CO2. Catalyzes the aldol cleavage of 4-hydroxy-4-methyl-2-oxoglutarate (HMG) into 2 molecules of pyruvate. Also contains a secondary oxaloacetate (OAA) decarboxylase activity due to the common pyruvate enolate transition state formed following C-C bond cleavage in the retro-aldol and decarboxylation reactions. This is Putative 4-hydroxy-4-methyl-2-oxoglutarate aldolase from Mycobacterium sp. (strain JLS).